The sequence spans 218 residues: MNCRSEVLEVSVEGRQVEEAMLAVLHTVLLHRSTGKFHYKKEGTYSIGTVGTQDVDCDFIDFTYVRVSSEELDRALRKVVGEFKDALRNSGGDGLGQMSLEFYQKKKSRWPFSDECIPWEVWTVKVHVVALATEQERQICREKVGEKLCEKIINIVEVMNRHEYLPKMPTQSEVDNVFDTGLRDVQPYLYKISFQITDALGTSVTTTMRRLIKDTLAL.

Positions 152-156 are important for interaction with ATG13; sequence IINIV.

It belongs to the ATG101 family. In terms of assembly, interacts with ATG13. Associates with a complex composed of ATG13, ULK1 and RB1CC1; the association with this complex requires the presence of ATG13.

The protein resides in the cytoplasm. It localises to the preautophagosomal structure. Its function is as follows. Autophagy factor required for autophagosome formation. Stabilizes ATG13, protecting it from proteasomal degradation. The chain is Autophagy-related protein 101 (ATG101) from Homo sapiens (Human).